We begin with the raw amino-acid sequence, 416 residues long: Imidazolonepropionase (416 aa).

Fe(3+) contacts are provided by histidine 78 and histidine 80. Zn(2+)-binding residues include histidine 78 and histidine 80. The 4-imidazolone-5-propanoate site is built by arginine 87, tyrosine 150, and histidine 183. An N-formimidoyl-L-glutamate-binding site is contributed by tyrosine 150. Histidine 248 is a binding site for Fe(3+). Histidine 248 is a binding site for Zn(2+). Glutamine 251 provides a ligand contact to 4-imidazolone-5-propanoate. Aspartate 323 is a Fe(3+) binding site. Residue aspartate 323 coordinates Zn(2+). Residues asparagine 325 and glycine 327 each coordinate N-formimidoyl-L-glutamate. Threonine 328 contributes to the 4-imidazolone-5-propanoate binding site.

The protein belongs to the metallo-dependent hydrolases superfamily. HutI family. Zn(2+) is required as a cofactor. It depends on Fe(3+) as a cofactor.

The protein localises to the cytoplasm. The catalysed reaction is 4-imidazolone-5-propanoate + H2O = N-formimidoyl-L-glutamate. The protein operates within amino-acid degradation; L-histidine degradation into L-glutamate; N-formimidoyl-L-glutamate from L-histidine: step 3/3. Catalyzes the hydrolytic cleavage of the carbon-nitrogen bond in imidazolone-5-propanoate to yield N-formimidoyl-L-glutamate. It is the third step in the universal histidine degradation pathway. The protein is Imidazolonepropionase of Vibrio campbellii (strain ATCC BAA-1116).